A 713-amino-acid chain; its full sequence is Undecaprenyl-diphosphooligosaccharide--protein glycotransferase (713 aa).

Residues 1 to 11 (MLKKEYLKNPY) are Cytoplasmic-facing. A helical membrane pass occupies residues 12-35 (LVLFAMIVLAYVFSVFCRFYWVWW). Residues 36–96 (ASEFNEYFFN…YWLYKITPFS (61 aa)) lie on the Periplasmic side of the membrane. The short motif at 52–54 (SND) is the DXD motif 1 element. Aspartate 54 is a Mn(2+) binding site. A helical transmembrane segment spans residues 97 to 122 (FESIILYMSTFLSSLVVIPIILLANE). Residues 123-125 (YKR) are Cytoplasmic-facing. The helical transmembrane segment at 126–144 (PLMGFVAALLASVANSYYN) threads the bilayer. The Periplasmic portion of the chain corresponds to 145–152 (RTMSGYYD). Aspartate 152 contacts Mn(2+). Positions 152–154 (DTD) match the DXD motif 2 motif. The chain crosses the membrane as a helical span at residues 153–174 (TDMLVIVLPMFILFFMVRMILK). At 175–176 (KD) the chain is on the cytoplasmic side. A helical membrane pass occupies residues 177–192 (FFSLIALPLFIGIYLW). At 193–197 (WYPSS) the chain is on the periplasmic side. A [alpha-D-GalNAc-(1-&gt;4)]2-[beta-D-Glc-(1-&gt;3)]-[alpha-D-GalNAc-(1-&gt;4)]2-alpha-D-GalNAc-(1-&gt;3)-alpha-D-diNAcBac-tri-trans,hepta-cis-undecaprenyl diphosphate-binding site is contributed by 194–196 (YPS). Residues 198-215 (YTLNVALIGLFLIYTLIF) form a helical membrane-spanning segment. Topologically, residues 216–220 (HRKEK) are cytoplasmic. The chain crosses the membrane as a helical span at residues 221 to 233 (IFYIAVILSSLTL). Topologically, residues 234 to 237 (SNIA) are periplasmic. Residues 238-254 (WFYQSAIIVILFALFAL) form a helical membrane-spanning segment. The Cytoplasmic portion of the chain corresponds to 255 to 260 (EQKRLN). The helical transmembrane segment at 261 to 278 (FMIIGILGSATLIFLILS) threads the bilayer. The Periplasmic segment spans residues 279–324 (GGVDPILYQLKFYIFRSDESANLTQGFMYFNVNQTIQEVENVDFSE). Tyrosine 291 is a [alpha-D-GalNAc-(1-&gt;4)]2-[beta-D-Glc-(1-&gt;3)]-[alpha-D-GalNAc-(1-&gt;4)]2-alpha-D-GalNAc-(1-&gt;3)-alpha-D-diNAcBac-tri-trans,hepta-cis-undecaprenyl diphosphate binding site. A TIXE motif motif is present at residues 313-316 (TIQE). Glutamate 316 contacts Mn(2+). The helical transmembrane segment at 325 to 347 (FMRRISGSEIVFLFSLFGFVWLL) threads the bilayer. Topologically, residues 348–352 (RKHKS) are cytoplasmic. The helical transmembrane segment at 353–369 (MIMALPILVLGFLALKG) threads the bilayer. Residues 370–373 (GLRF) are Periplasmic-facing. Arginine 372 contributes to the [alpha-D-GalNAc-(1-&gt;4)]2-[beta-D-Glc-(1-&gt;3)]-[alpha-D-GalNAc-(1-&gt;4)]2-alpha-D-GalNAc-(1-&gt;3)-alpha-D-diNAcBac-tri-trans,hepta-cis-undecaprenyl diphosphate binding site. The helical transmembrane segment at 374–396 (TIYSVPVMALGFGFLLSEFKAIL) threads the bilayer. Over 397–406 (VKKYSQLTSN) the chain is Cytoplasmic. A helical membrane pass occupies residues 407–427 (VCIVFATILTLAPVFIHIYNY). Topologically, residues 428–713 (KAPTVFSQNE…RDAKVFKLKI (286 aa)) are periplasmic. An interacts with target acceptor peptide in protein substrate region spans residues 457–459 (WWD). The WWDYG motif motif lies at 457-461 (WWDYG). Tyrosine 462 lines the [alpha-D-GalNAc-(1-&gt;4)]2-[beta-D-Glc-(1-&gt;3)]-[alpha-D-GalNAc-(1-&gt;4)]2-alpha-D-GalNAc-(1-&gt;3)-alpha-D-diNAcBac-tri-trans,hepta-cis-undecaprenyl diphosphate pocket. Residue asparagine 534 is glycosylated (N-linked (DATDGlc) asparagine). The MI motif motif lies at 568–575 (MSLIFSTV).

The protein belongs to the STT3 family. Mg(2+) serves as cofactor. Requires Mn(2+) as cofactor.

Its subcellular location is the cell inner membrane. It carries out the reaction tritrans,heptacis-undecaprenyl diphosphooligosaccharide + [protein]-L-asparagine = tritrans,heptacis-undecaprenyl diphosphate + a glycoprotein with the oligosaccharide chain attached by N-beta-D-glycosyl linkage to protein L-asparagine.. It participates in protein modification; protein glycosylation. In terms of biological role, oligosaccharyl transferase (OST) that catalyzes the initial transfer of a defined glycan (GalNAc(2)GlcGalNAc(3)Bac(NAc)(2) in eubacteria, where Bac(NAc)(2) is di-N-acetyl bacillosamine) from the lipid carrier undecaprenol-pyrophosphate to an asparagine residue within an Asp/Glu-Asn-X-Ser/Thr consensus motif in nascent polypeptide chains, the first step in protein N-glycosylation. The protein is Undecaprenyl-diphosphooligosaccharide--protein glycotransferase (pglB) of Campylobacter jejuni subsp. jejuni serotype O:2 (strain ATCC 700819 / NCTC 11168).